Consider the following 61-residue polypeptide: Large ribosomal subunit protein bL28 (61 aa).

It belongs to the bacterial ribosomal protein bL28 family.

In Nocardioides sp. (strain ATCC BAA-499 / JS614), this protein is Large ribosomal subunit protein bL28.